Consider the following 449-residue polypeptide: Putative tartrate transporter (449 aa).

11 helical membrane-spanning segments follow: residues 34-54 (IVPF…NIGF), 64-84 (GFSS…YFLF), 99-119 (IWIA…AFVQ), 130-150 (LLGV…SFWF), 156-176 (AAVT…GSPI), 194-214 (WMFL…LFFL), 259-279 (VIAL…LGIW), 292-312 (IEVG…MVLW), 336-356 (GLAF…LTIV), 367-387 (LWSM…IATI), and 414-434 (GGLY…LILA).

The protein belongs to the major facilitator superfamily. Phthalate permease family.

It localises to the cell membrane. Component of the tartrate utilization system and may allow entry of tartrate and tartrate dehydrogenase. The protein is Putative tartrate transporter (ttuB) of Agrobacterium vitis (Rhizobium vitis).